The chain runs to 451 residues: Cyclin-dependent kinase 14 (451 aa).

A phosphoserine mark is found at Ser-60 and Ser-77. A disordered region spans residues 84–114; that stretch reads NFKTSSTGKESPKVRRHSSPSSPTSPKFGKA. At Ser-116 the chain carries Phosphoserine. One can recognise a Protein kinase domain in the interval 117–401; it reads YEKLEKLGEG…AQAALSHEYF (285 aa). Residues 123 to 131 and Lys-146 each bind ATP; that span reads LGEGSYATV. Catalysis depends on Asp-238, which acts as the Proton acceptor.

Belongs to the protein kinase superfamily. CMGC Ser/Thr protein kinase family. CDC2/CDKX subfamily. In terms of assembly, found in a complex with LRP6, CCNY and CAPRIN2 during G2/M stage; CAPRIN2 functions as a scaffold for the complex by binding to CCNY via its N terminus and to CDK14 via its C terminus. Interacts with CCNY; CCNY mediates its recruitment to the plasma membrane and promotes phosphorylation of LRP6. Interacts with CCDN3 and CDKN1A. Interacts with SEPT8. Interacts with 14-3-3 proteina YWHAB, YWHAE, YWHAH and YWHAQ.

The protein resides in the cell membrane. It is found in the cytoplasm. It localises to the nucleus. The catalysed reaction is L-seryl-[protein] + ATP = O-phospho-L-seryl-[protein] + ADP + H(+). It catalyses the reaction L-threonyl-[protein] + ATP = O-phospho-L-threonyl-[protein] + ADP + H(+). With respect to regulation, serine/threonine-protein kinase activity is promoted by associated cyclins CCDN3 and CCNY and repressed by CDKN1A. In terms of biological role, serine/threonine-protein kinase involved in the control of the eukaryotic cell cycle, whose activity is controlled by an associated cyclin. Acts as a cell-cycle regulator of Wnt signaling pathway during G2/M phase by mediating the phosphorylation of LRP6 at 'Ser-1490', leading to the activation of the Wnt signaling pathway. Acts as a regulator of cell cycle progression and cell proliferation via its interaction with CCDN3. Phosphorylates RB1 in vitro, however the relevance of such result remains to be confirmed in vivo. May also play a role in meiosis, neuron differentiation and may indirectly act as a negative regulator of insulin-responsive glucose transport. In Plecturocebus moloch (Dusky titi monkey), this protein is Cyclin-dependent kinase 14 (CDK14).